Here is a 432-residue protein sequence, read N- to C-terminus: Short/branched chain specific acyl-CoA dehydrogenase, mitochondrial (432 aa).

Residues 1–33 constitute a mitochondrion transit peptide; the sequence is MEGLAVRLLRGSRLLRRNFLTCLSSWKIPPHVS. An N6-acetyllysine; alternate modification is found at K70. The residue at position 70 (K70) is an N6-succinyllysine; alternate. Residues 174–183 and 207–209 each bind FAD; these read FCLSEAGAGS and WIS. S183 contacts substrate. S183 is subject to Phosphoserine. Substrate-binding residues include Y229 and Y283. K284 carries the N6-acetyllysine; alternate modification. K284 is subject to N6-succinyllysine; alternate. 291-294 lines the substrate pocket; sequence NEGR. Residues R319, Q330, and 387–391 contribute to the FAD site; that span reads EWMGG. E414 (proton acceptor) is an active-site residue. 416 to 418 lines the FAD pocket; sequence ASN. N6-acetyllysine is present on K426.

It belongs to the acyl-CoA dehydrogenase family. As to quaternary structure, homotetramer. Requires FAD as cofactor. As to expression, ubiquitously expressed.

It is found in the mitochondrion matrix. The catalysed reaction is 2-methylbutanoyl-CoA + oxidized [electron-transfer flavoprotein] + H(+) = (2E)-2-methylbut-2-enoyl-CoA + reduced [electron-transfer flavoprotein]. The enzyme catalyses (2S)-2-methylbutanoyl-CoA + oxidized [electron-transfer flavoprotein] + H(+) = (2E)-2-methylbut-2-enoyl-CoA + reduced [electron-transfer flavoprotein]. It carries out the reaction (2R)-2-methylbutanoyl-CoA + oxidized [electron-transfer flavoprotein] + H(+) = ethylacryloyl-CoA + reduced [electron-transfer flavoprotein]. It catalyses the reaction butanoyl-CoA + oxidized [electron-transfer flavoprotein] + H(+) = (2E)-butenoyl-CoA + reduced [electron-transfer flavoprotein]. The catalysed reaction is 2-methylpropanoyl-CoA + oxidized [electron-transfer flavoprotein] + H(+) = 2-methylpropenoyl-CoA + reduced [electron-transfer flavoprotein]. The enzyme catalyses hexanoyl-CoA + oxidized [electron-transfer flavoprotein] + H(+) = (2E)-hexenoyl-CoA + reduced [electron-transfer flavoprotein]. It carries out the reaction 2-methylhexanoyl-CoA + oxidized [electron-transfer flavoprotein] + H(+) = 2-methylhexenoyl-CoA + reduced [electron-transfer flavoprotein]. It catalyses the reaction valproyl-CoA + oxidized [electron-transfer flavoprotein] + H(+) = (2E)-2-propylpent-2-enoyl-CoA + reduced [electron-transfer flavoprotein]. The protein operates within lipid metabolism; mitochondrial fatty acid beta-oxidation. It functions in the pathway amino-acid degradation; L-isoleucine degradation. Competitively inhibited by valproyl-CoA. Its function is as follows. Short and branched chain specific acyl-CoA dehydrogenase that catalyzes the removal of one hydrogen from C-2 and C-3 of the fatty acyl-CoA thioester, resulting in the formation of trans-2-enoyl-CoA. Among the different mitochondrial acyl-CoA dehydrogenases, acts specifically on short and branched chain acyl-CoA derivatives such as (S)-2-methylbutyryl-CoA as well as short straight chain acyl-CoAs such as butyryl-CoA. Plays an important role in the metabolism of L-isoleucine by catalyzing the dehydrogenation of 2-methylbutyryl-CoA, one of the steps of the L-isoleucine catabolic pathway. Can also act on valproyl-CoA, a metabolite of valproic acid, an antiepileptic drug. The protein is Short/branched chain specific acyl-CoA dehydrogenase, mitochondrial of Homo sapiens (Human).